The sequence spans 173 residues: Nucleoside-triphosphatase THEP1 (173 aa).

ATP is bound by residues 15–22 (GMPGVGKT) and 101–108 (LKIIDEIG).

It belongs to the THEP1 NTPase family.

The catalysed reaction is a ribonucleoside 5'-triphosphate + H2O = a ribonucleoside 5'-diphosphate + phosphate + H(+). Has nucleotide phosphatase activity towards ATP, GTP, CTP, TTP and UTP. May hydrolyze nucleoside diphosphates with lower efficiency. This Pyrobaculum aerophilum (strain ATCC 51768 / DSM 7523 / JCM 9630 / CIP 104966 / NBRC 100827 / IM2) protein is Nucleoside-triphosphatase THEP1.